A 210-amino-acid chain; its full sequence is Large ribosomal subunit protein uL3 (210 aa).

The interval 133 to 152 (ATHGNSLSHRVHGSTGQNQT) is disordered. Gln151 carries the N5-methylglutamine modification.

It belongs to the universal ribosomal protein uL3 family. Part of the 50S ribosomal subunit. Forms a cluster with proteins L14 and L19. Post-translationally, methylated by PrmB.

Functionally, one of the primary rRNA binding proteins, it binds directly near the 3'-end of the 23S rRNA, where it nucleates assembly of the 50S subunit. This chain is Large ribosomal subunit protein uL3, found in Francisella tularensis subsp. holarctica (strain FTNF002-00 / FTA).